Reading from the N-terminus, the 120-residue chain is uncharacterized protein (120 aa).

An N-terminal signal peptide occupies residues 1-27 (MPKIGVSLIVLIMLIIFLAGCNKNEQN).

This is an uncharacterized protein from Bacillus subtilis (strain 168).